Reading from the N-terminus, the 300-residue chain is Bidirectional sugar transporter SWEET12 (300 aa).

Topologically, residues 1–4 (MVQA) are extracellular. The helical transmembrane segment at 5–25 (LVFAVGIVGNILSFLVILAPV) threads the bilayer. A MtN3/slv 1 domain is found at 8–92 (AVGIVGNILS…TVYLLYAPRQ (85 aa)). Residues 26-38 (PTFYRVYKKKSTE) are Cytoplasmic-facing. The chain crosses the membrane as a helical span at residues 39-61 (SFQSVPYAVALLSAMLWLYYALL). Residues 62-67 (TSDLLL) lie on the Extracellular side of the membrane. The helical transmembrane segment at 68 to 88 (LSINSIGCLVESLYLTVYLLY) threads the bilayer. The Cytoplasmic portion of the chain corresponds to 89–99 (APRQAMAFTLK). Residues 100–120 (LVCAMNLALFAAVVAALQLLV) form a helical membrane-spanning segment. The Extracellular portion of the chain corresponds to 121-128 (KATDRRVT). Residues 129 to 149 (LAGGIGASFALAVFVAPLTII) traverse the membrane as a helical segment. Residues 131 to 213 (GGIGASFALA…VLYVVYKNPK (83 aa)) form the MtN3/slv 2 domain. Topologically, residues 150-162 (RQVIRTKSVEFMP) are cytoplasmic. The chain crosses the membrane as a helical span at residues 163 to 183 (FWLSFFLTLSAVVWFFYGLLM). The Extracellular portion of the chain corresponds to 184-185 (KD). Residues 186–206 (FFVATPNVLGLLFGLAQMVLY) traverse the membrane as a helical segment. The Cytoplasmic segment spans residues 207 to 300 (VVYKNPKKNS…PPALPAVEVA (94 aa)). Residues 256 to 300 (ADLEAAAPATPQRPADDDAIDHRSVVVDIPPPPQPPPALPAVEVA) are disordered. The segment covering 269–280 (PADDDAIDHRSV) has biased composition (basic and acidic residues). Over residues 284–294 (IPPPPQPPPAL) the composition is skewed to pro residues.

Belongs to the SWEET sugar transporter family. In terms of assembly, forms homooligomers and/or heterooligomers.

Its subcellular location is the cell membrane. In terms of biological role, mediates both low-affinity uptake and efflux of sugar across the plasma membrane. Confers blight susceptibility. Confers TAL effector-mediated susceptibility to Xanthomonas oryzae pv. oryzae. The protein is Bidirectional sugar transporter SWEET12 (SWEET12) of Oryza sativa subsp. japonica (Rice).